A 451-amino-acid chain; its full sequence is MTYFFETYGCQMNQAESSSMEQILLEKGWTNSSDAEHCDLLIINTCSVRITAENRVLGRLGHFSGLKKKRKFFVLLIGCMAERLYTEIQKEFPLIDYVVGMFERNLLPQIFDEIKARLKNDNYMAEFTHDNIEEKPVSGYYFAPLSHSPKSFQSYVPIMNGCNNFCTYCIVPYVRGREVSRPVNEILQEITELSSRGVREITLLGQNVNSYKGEDGEGRLIDFPKLLTLIAREADKTDMIRWIRFMSSHPKDMSDALIDTIAAEKRLCKLVHLPVQHGSDTILKRMNRVYTIEHYKNRIKRLKETIPDIALSTDILMGFPGETEDDVKATLDLMQEIEFDSAFMYHYNPREGTKAFNYPDRIPEEVKIERLGRVIDLQLKITAKKMKAKLGKKVDILVESHSRNERSELFGHTEQGEMTVIQGNPPESLIGNFAHAELKELKGKTFRANLN.

The region spanning 1–116 (MTYFFETYGC…LPQIFDEIKA (116 aa)) is the MTTase N-terminal domain. Residues cysteine 10, cysteine 46, cysteine 79, cysteine 162, cysteine 166, and cysteine 169 each contribute to the [4Fe-4S] cluster site. One can recognise a Radical SAM core domain in the interval 148–384 (SPKSFQSYVP…IDLQLKITAK (237 aa)). Residues 387–451 (KAKLGKKVDI…KGKTFRANLN (65 aa)) form the TRAM domain.

It belongs to the methylthiotransferase family. MiaB subfamily. As to quaternary structure, monomer. [4Fe-4S] cluster serves as cofactor.

Its subcellular location is the cytoplasm. It catalyses the reaction N(6)-dimethylallyladenosine(37) in tRNA + (sulfur carrier)-SH + AH2 + 2 S-adenosyl-L-methionine = 2-methylsulfanyl-N(6)-dimethylallyladenosine(37) in tRNA + (sulfur carrier)-H + 5'-deoxyadenosine + L-methionine + A + S-adenosyl-L-homocysteine + 2 H(+). Functionally, catalyzes the methylthiolation of N6-(dimethylallyl)adenosine (i(6)A), leading to the formation of 2-methylthio-N6-(dimethylallyl)adenosine (ms(2)i(6)A) at position 37 in tRNAs that read codons beginning with uridine. This Treponema denticola (strain ATCC 35405 / DSM 14222 / CIP 103919 / JCM 8153 / KCTC 15104) protein is tRNA-2-methylthio-N(6)-dimethylallyladenosine synthase.